Reading from the N-terminus, the 666-residue chain is MIEMAAEKEPFLVPAPPPPLKDESGGGGGPEVQSHQEAASGELRDGTEHGPGPRAHSAGAAASGGGGPQAQAHGEPHGRAAAPADVGEERRGGGGTDLGPPAPPRPRNGYQPHRPPGGGGGKRRNSCNVGGGSGGSFKHPAFKRRRRVNSDCDSVLPSNFLLGGNIFDPLNLNSLLDEEVSRALNAETPKSSPLPAKGRDPVEILIPKDITDPLSLNTCTDEAHVVLASPLKIGRKRHRHRGPHHQQQQQASGGNDSNAAVLPTDPLTPSLHGEGATQQQQNRGQNRDAPQPYELNTAINCRDEVVSPLPSALQGSSGSLSAPPAASVTSAPSTSSSSRHRKRRRTSSKSEAGARGGSQGSKEKGRGSGGGRHHHHPLPATGFKKQQLKFQYGNYCKYYGYRNPSCEDVRLRVLKPEWFQGRDVLDLGCNVGHLTLSIACKWGPARMVGLDIDPRLIHSARQNIRHYLSEELRLQAQTSEGDPGTEGEEGTITVRKRSCFPASLTASRGPIAAPQVPLDGADTSVFPNNVVFVTGNYVLDRDELVDAQRPEYDVVLCFSLTKWVHLNWGDEGLKRMFRRIYRHLRPGGILVLEPQPWSSYCKRKSLTETIYKNYFRIQLKPEQFSSYLTSPEVGFSSYELVATPNNTSRGFQRPVYLFHKARSPSH.

An N-acetylmethionine modification is found at Met1. Basic and acidic residues predominate over residues Met1 to Pro10. The tract at residues Met1–Ala141 is disordered. Positions Gly50–Ala61 are enriched in low complexity. Ser57 carries the post-translational modification Phosphoserine. Residue Arg91 is modified to Omega-N-methylarginine. Phosphoserine occurs at positions 126, 150, and 154. Thr188 is modified (phosphothreonine). Ser191, Ser192, and Ser229 each carry phosphoserine. The span at Arg235–His244 shows a compositional bias: basic residues. The disordered stretch occupies residues Arg235–Gln291. Over residues His245–Gly254 the composition is skewed to low complexity. Thr268 bears the Phosphothreonine mark. Phosphoserine occurs at positions 307 and 321. A compositionally biased stretch (low complexity) spans Leu309 to Ser337. A disordered region spans residues Leu309 to Phe383. Positions Ser338–Ser347 are enriched in basic residues. Ser368 is modified (phosphoserine). S-adenosyl-L-methionine-binding positions include Tyr399, Arg410, Gly428–Asn430, Asp451–Ile452, Asn536–Tyr537, and Phe558. In terms of domain architecture, Bin3-type SAM spans Asp408–Ser663. Lys620 is covalently cross-linked (Glycyl lysine isopeptide (Lys-Gly) (interchain with G-Cter in SUMO2)).

It belongs to the methyltransferase superfamily. Core component of the 7SK RNP complex, at least composed of 7SK RNA, LARP7, MEPCE, HEXIM1 (or HEXIM2) and P-TEFb (composed of CDK9 and CCNT1/cyclin-T1). Interacts with METTL16. Interacts with RBM7; upon genotoxic stress this interaction is enhanced, triggering the release of inactive P-TEFb complex from the core, yielding to P-TEFb complex activation. Post-translationally, dephosphorylated at Ser-126 by the PNUTS-PP1 complex, promoting RNA polymerase II transcription pause-release.

Its subcellular location is the nucleus. It catalyses the reaction a 5'-end triphospho-guanosine-ribonucleotide-snRNA + S-adenosyl-L-methionine = a 5'-end methyltriphosphate-guanosine-ribonucleotide-snRNA + S-adenosyl-L-homocysteine. Its function is as follows. S-adenosyl-L-methionine-dependent methyltransferase that adds a methylphosphate cap at the 5'-end of 7SK snRNA (7SK RNA), leading to stabilize it. Also has a non-enzymatic function as part of the 7SK RNP complex: the 7SK RNP complex sequesters the positive transcription elongation factor b (P-TEFb) in a large inactive 7SK RNP complex preventing RNA polymerase II phosphorylation and subsequent transcriptional elongation. The 7SK RNP complex also promotes snRNA gene transcription by RNA polymerase II via interaction with the little elongation complex (LEC). In the 7SK RNP complex, MEPCE is required to stabilize 7SK RNA and facilitate the assembly of 7SK RNP complex. MEPCE has a non-enzymatic function in the 7SK RNP complex; it has a non-enzymatic function; interaction with LARP7 within the 7SK RNP complex occluding its catalytic center. Also required for stability of U6 snRNAs. This chain is 7SK snRNA methylphosphate capping enzyme, found in Mus musculus (Mouse).